The primary structure comprises 88 residues: Large ribosomal subunit protein eL15 (88 aa).

This sequence belongs to the eukaryotic ribosomal protein eL15 family.

The sequence is that of Large ribosomal subunit protein eL15 (RPL15) from Brassica napus (Rape).